A 384-amino-acid polypeptide reads, in one-letter code: Lipoprotein LprN (384 aa).

The N-terminal stretch at 1-20 (MNRIWLRAIILTASSALLAG) is a signal peptide. Cysteine 21 is lipidated: N-palmitoyl cysteine. The S-diacylglycerol cysteine moiety is linked to residue cysteine 21.

In terms of processing, lipidated upon expression in E.coli.

It is found in the cell membrane. Stimulates the host (mouse) immune response; lipidated protein produced in E.coli stimulates T-cell proliferation in mice previously sensitized with LprN. Spleenocytes from these mice produce increased amounts of TNF-alpha and IFN-gamma, as well as somewhat increased nitric oxide levels, upon subsequent challenge with LprN. Previously sensitized mice infected with M.tuberculosis have an exacerbated disease response, suggesting this lipoprotein may down-regulate the host's immune response. The protein is Lipoprotein LprN (lprN) of Mycobacterium tuberculosis (strain ATCC 25618 / H37Rv).